Consider the following 439-residue polypeptide: Magnesium-dependent glutamate N-prenyltransferase (439 aa).

4 residues coordinate Mg(2+): asparagine 322, threonine 326, glutamate 330, and phenylalanine 337.

Belongs to the terpene synthase family. Requires Mg(2+) as cofactor.

It carries out the reaction dimethylallyl diphosphate + L-glutamate = prekainate + diphosphate. Its pathway is secondary metabolite biosynthesis. Magnesium-dependent glutamate N-prenyltransferase: part of the gene cluster that mediates the biosynthesis of kainic acid (KA) and derivatives, natural products with neurochemical activity acting as ionotropic glutamate receptor (iGluR) agonists, thus being neurotoxins. Catalyzes the conversion of L-glutamic acid (L-Glu) to prekainic acid in the presence of dimethylallyl diphosphate (DMAPP). Can also use geranyl diphosphate (GPP) as substrate, thus leading to the formation of N-geranyl-L-glutamic acid (L-NGG). The polypeptide is Magnesium-dependent glutamate N-prenyltransferase (Digenea simplex (Marine red alga)).